The sequence spans 1399 residues: DNA-directed RNA polymerase subunit beta' (1399 aa).

4 residues coordinate Zn(2+): Cys70, Cys72, Cys85, and Cys88. 3 residues coordinate Mg(2+): Asp460, Asp462, and Asp464. Zn(2+) contacts are provided by Cys814, Cys888, Cys895, and Cys898.

Belongs to the RNA polymerase beta' chain family. In terms of assembly, the RNAP catalytic core consists of 2 alpha, 1 beta, 1 beta' and 1 omega subunit. When a sigma factor is associated with the core the holoenzyme is formed, which can initiate transcription. Mg(2+) serves as cofactor. The cofactor is Zn(2+).

It catalyses the reaction RNA(n) + a ribonucleoside 5'-triphosphate = RNA(n+1) + diphosphate. Its function is as follows. DNA-dependent RNA polymerase catalyzes the transcription of DNA into RNA using the four ribonucleoside triphosphates as substrates. This is DNA-directed RNA polymerase subunit beta' from Stutzerimonas stutzeri (strain A1501) (Pseudomonas stutzeri).